Consider the following 442-residue polypeptide: QWRF motif-containing protein 6 (442 aa).

Disordered regions lie at residues 1–144 (MEAK…LSQQ) and 221–240 (FSRLGLPLPPMAPKVPADTK). A compositionally biased stretch (basic residues) spans 57-66 (KQHHLQHHQI). A compositionally biased stretch (basic and acidic residues) spans 80 to 89 (KMADGDENRS). A QWRF motif motif is present at residues 264–267 (QWRF).

It belongs to the QWRF family.

In Arabidopsis thaliana (Mouse-ear cress), this protein is QWRF motif-containing protein 6 (QWRF6).